The primary structure comprises 146 residues: Mite group 2 allergen Der f 2 (146 aa).

An N-terminal signal peptide occupies residues 1 to 17 (MISKILCLSLLVAAVVA). 3 disulfide bridges follow: cysteine 25–cysteine 136, cysteine 38–cysteine 44, and cysteine 90–cysteine 95.

Belongs to the NPC2 family.

Its subcellular location is the secreted. This Dermatophagoides farinae (American house dust mite) protein is Mite group 2 allergen Der f 2 (DERF2).